Reading from the N-terminus, the 339-residue chain is Putative phosphate acyltransferase (339 aa).

Belongs to the PlsX family. Homodimer. Probably interacts with PlsY.

The protein localises to the cytoplasm. The enzyme catalyses a fatty acyl-[ACP] + phosphate = an acyl phosphate + holo-[ACP]. It participates in lipid metabolism; phospholipid metabolism. In terms of biological role, catalyzes the reversible formation of acyl-phosphate (acyl-PO(4)) from acyl-[acyl-carrier-protein] (acyl-ACP). This enzyme utilizes acyl-ACP as fatty acyl donor, but not acyl-CoA. The sequence is that of Putative phosphate acyltransferase from Clostridium perfringens (strain 13 / Type A).